The primary structure comprises 442 residues: ORC1-type DNA replication protein 8 (442 aa).

Residues 66–70 and Tyr218 contribute to the ATP site; that span reads VGKTA.

Belongs to the CDC6/cdc18 family.

Functionally, involved in regulation of DNA replication. The protein is ORC1-type DNA replication protein 8 (cdc6h) of Haloarcula marismortui (strain ATCC 43049 / DSM 3752 / JCM 8966 / VKM B-1809) (Halobacterium marismortui).